We begin with the raw amino-acid sequence, 843 residues long: Protein translocase subunit SecA (843 aa).

ATP-binding positions include Q85, 103-107 (GEGKT), and D490. The tract at residues 799 to 834 (KNAVENRSDDSLPKQPVKAEPRVGRNDPCPCGSGKK) is disordered. Over residues 802–823 (VENRSDDSLPKQPVKAEPRVGR) the composition is skewed to basic and acidic residues. C827, C829, C838, and C839 together coordinate Zn(2+).

This sequence belongs to the SecA family. In terms of assembly, monomer and homodimer. Part of the essential Sec protein translocation apparatus which comprises SecA, SecYEG and auxiliary proteins SecDF. Other proteins may also be involved. Requires Zn(2+) as cofactor.

Its subcellular location is the cell membrane. It localises to the cytoplasm. The enzyme catalyses ATP + H2O + cellular proteinSide 1 = ADP + phosphate + cellular proteinSide 2.. Its function is as follows. Part of the Sec protein translocase complex. Interacts with the SecYEG preprotein conducting channel. Has a central role in coupling the hydrolysis of ATP to the transfer of proteins into and across the cell membrane, serving as an ATP-driven molecular motor driving the stepwise translocation of polypeptide chains across the membrane. The sequence is that of Protein translocase subunit SecA from Heliobacterium modesticaldum (strain ATCC 51547 / Ice1).